A 116-amino-acid polypeptide reads, in one-letter code: U16-barytoxin-Tl1f (116 aa).

Positions 1–20 are cleaved as a signal peptide; sequence MKTIIVFLSLLVLATKFGDA. The propeptide occupies 21–74; it reads NEGVNQEQMKEVIQNEFREDFLNEMAAMSLLQQLEAIESTLLEKEADRNSRQKR. Cystine bridges form between cysteine 75/cysteine 90, cysteine 82/cysteine 95, and cysteine 89/cysteine 110. N-linked (GlcNAc...) asparagine glycosylation is present at asparagine 85.

This sequence belongs to the neurotoxin 14 (magi-1) family. 06 (ICK-Trit) subfamily. As to expression, expressed by the venom gland.

The protein resides in the secreted. Functionally, ion channel inhibitor. This is U16-barytoxin-Tl1f from Trittame loki (Brush-footed trapdoor spider).